Here is a 372-residue protein sequence, read N- to C-terminus: Lung adenoma susceptibility protein 2 (372 aa).

The signal sequence occupies residues 1-31 (MAKSKTKHRLCSQESSVSALLASCTLSGSNS). S161 carries the post-translational modification Phosphoserine. The disordered stretch occupies residues 248 to 268 (KSPVPVNSDDSPQQTSRAKSA). Over residues 255–265 (SDDSPQQTSRA) the composition is skewed to polar residues.

It is found in the secreted. Functionally, might play a role in cell proliferation. The chain is Lung adenoma susceptibility protein 2 (LAS2) from Homo sapiens (Human).